Reading from the N-terminus, the 345-residue chain is Skn-1 dependent zygotic transcript 15 protein (345 aa).

Residues 11-55 form the F-box domain; that stretch reads AFGLHKLPHLVSDKVVKSMVPMELFTYSMVAEETKALVKRLFKKV.

Functionally, may have a role in embryogenesis. The polypeptide is Skn-1 dependent zygotic transcript 15 protein (sdz-15) (Caenorhabditis elegans).